A 233-amino-acid chain; its full sequence is Leucyl/phenylalanyl-tRNA--protein transferase (233 aa).

The protein belongs to the L/F-transferase family.

The protein localises to the cytoplasm. It carries out the reaction N-terminal L-lysyl-[protein] + L-leucyl-tRNA(Leu) = N-terminal L-leucyl-L-lysyl-[protein] + tRNA(Leu) + H(+). It catalyses the reaction N-terminal L-arginyl-[protein] + L-leucyl-tRNA(Leu) = N-terminal L-leucyl-L-arginyl-[protein] + tRNA(Leu) + H(+). The catalysed reaction is L-phenylalanyl-tRNA(Phe) + an N-terminal L-alpha-aminoacyl-[protein] = an N-terminal L-phenylalanyl-L-alpha-aminoacyl-[protein] + tRNA(Phe). Functions in the N-end rule pathway of protein degradation where it conjugates Leu, Phe and, less efficiently, Met from aminoacyl-tRNAs to the N-termini of proteins containing an N-terminal arginine or lysine. The sequence is that of Leucyl/phenylalanyl-tRNA--protein transferase from Anaeromyxobacter dehalogenans (strain 2CP-1 / ATCC BAA-258).